The following is a 312-amino-acid chain: MDFYNICCKYLKEIELTREDYSADRNSPQYNLFCSHHINPKFNKGGDEPENLVLLHYFEHAYVHLFRWLITDNPRDLGGFTSAMNAKERRELQIEKRRENPPKLTLPPLPPPAEERKKPAKTAKAIRAGKAVGSKYQLQSLKRANPFTMFMANLVLKFINNNGIEVIHKPSDNIKDVSVNSASAIGRALNNVYPTETLTNSPDGISKLLKGTNKIVQNWRIDSLFIDDFEYEITQEVLLKYQDLFETLTTYFSENQELSILELTKSMADIRNSNPKEIALIQKMFTFIKKWSFLIKSLSEGKADDEIDLPTD.

The interval 95-119 (EKRRENPPKLTLPPLPPPAEERKKP) is disordered.

The protein resides in the plastid. Its subcellular location is the chloroplast. This is an uncharacterized protein from Chlamydomonas moewusii (Chlamydomonas eugametos).